The following is a 310-amino-acid chain: Methionyl-tRNA formyltransferase (310 aa).

Position 111–114 (111–114 (SILP)) interacts with (6S)-5,6,7,8-tetrahydrofolate.

It belongs to the Fmt family.

The catalysed reaction is L-methionyl-tRNA(fMet) + (6R)-10-formyltetrahydrofolate = N-formyl-L-methionyl-tRNA(fMet) + (6S)-5,6,7,8-tetrahydrofolate + H(+). In terms of biological role, attaches a formyl group to the free amino group of methionyl-tRNA(fMet). The formyl group appears to play a dual role in the initiator identity of N-formylmethionyl-tRNA by promoting its recognition by IF2 and preventing the misappropriation of this tRNA by the elongation apparatus. The protein is Methionyl-tRNA formyltransferase of Methylobacterium sp. (strain 4-46).